We begin with the raw amino-acid sequence, 284 residues long: Signal peptidase I (284 aa).

The chain crosses the membrane as a helical span at residues 4-22; sequence NFPLLLVIAVAVCGLLALL. Topologically, residues 23–58 are cytoplasmic; it reads DLVFFAPRRRSAIASYQGSVSQPDAVVIEKLNKEPL. Residues 59-77 traverse the membrane as a helical segment; the sequence is LVEYGKSFFPVLFIVLVLR. The Periplasmic segment spans residues 78–284; sequence SFLVEPFQIP…PNFSRVGLIK (207 aa). Catalysis depends on residues serine 90 and lysine 145.

This sequence belongs to the peptidase S26 family.

It localises to the cell inner membrane. The catalysed reaction is Cleavage of hydrophobic, N-terminal signal or leader sequences from secreted and periplasmic proteins.. This is Signal peptidase I (lepB) from Pseudomonas fluorescens.